The sequence spans 109 residues: Aquaporin-2 (109 aa).

Residues 1 to 6 (SVAFSR) are Cytoplasmic-facing. Residues 7–27 (AVFAEFLATLLFVFFGLGSAL) traverse the membrane as a helical segment. Residues 28 to 35 (NWPQALPS) are Extracellular-facing. A helical transmembrane segment spans residues 36–54 (VLQIAMAFGLGIGTLVQAL). At 55-59 (GHVSG) the chain is on the cytoplasmic side. An intramembrane region (discontinuously helical) is located at residues 60 to 69 (AHINPAVTVA). Positions 63–65 (NPA) match the NPA 1 motif. At 70-80 (CLVGCHVSFLR) the chain is on the cytoplasmic side. A helical membrane pass occupies residues 81–102 (AAFYVAAQLLGAVAGAALLHEI). The Extracellular portion of the chain corresponds to 103-109 (TPPHVRG).

The protein belongs to the MIP/aquaporin (TC 1.A.8) family. Homotetramer. In terms of processing, serine phosphorylation is necessary and sufficient for expression at the apical membrane. Endocytosis is not phosphorylation-dependent. Post-translationally, N-glycosylated.

It localises to the apical cell membrane. The protein resides in the basolateral cell membrane. Its subcellular location is the cell membrane. It is found in the cytoplasmic vesicle membrane. The protein localises to the golgi apparatus. It localises to the trans-Golgi network membrane. It catalyses the reaction H2O(in) = H2O(out). It carries out the reaction glycerol(in) = glycerol(out). Forms a water-specific channel that provides the plasma membranes of renal collecting duct with high permeability to water, thereby permitting water to move in the direction of an osmotic gradient. Plays an essential role in renal water homeostasis. Could also be permeable to glycerol. This chain is Aquaporin-2, found in Canis lupus familiaris (Dog).